The chain runs to 184 residues: Elongation factor P (184 aa).

Belongs to the elongation factor P family.

The protein localises to the cytoplasm. It participates in protein biosynthesis; polypeptide chain elongation. Involved in peptide bond synthesis. Stimulates efficient translation and peptide-bond synthesis on native or reconstituted 70S ribosomes in vitro. Probably functions indirectly by altering the affinity of the ribosome for aminoacyl-tRNA, thus increasing their reactivity as acceptors for peptidyl transferase. This is Elongation factor P from Verminephrobacter eiseniae (strain EF01-2).